Reading from the N-terminus, the 559-residue chain is Probable alpha-(1-&gt;6)-mannopyranosyltransferase MSMEG_3120/MSMEI_3041 (559 aa).

A run of 12 helical transmembrane segments spans residues 41–61 (FGAT…ARPV), 81–101 (VSLT…LMLG), 202–222 (IVEA…LIVW), 247–267 (LLFM…GLML), 300–316 (WQPM…IAMS), 321–340 (LPSL…RWGG), 355–375 (ISLA…GWLF), 386–406 (WMSP…LLGL), 419–439 (AIGV…VLRG), 455–475 (VLLF…PLAA), 480–500 (PGFR…GPTA), and 507–527 (LFQI…LIAL). The segment covering 535–548 (RPAPEPPARPPEQP) has biased composition (pro residues). Residues 535-559 (RPAPEPPARPPEQPAPADDAYAESP) form a disordered region.

Belongs to the MptA/B family.

Its subcellular location is the membrane. Catalyzes the addition of alpha-(1-&gt;6)-mannose residue. In Mycolicibacterium smegmatis (strain ATCC 700084 / mc(2)155) (Mycobacterium smegmatis), this protein is Probable alpha-(1-&gt;6)-mannopyranosyltransferase MSMEG_3120/MSMEI_3041.